The chain runs to 275 residues: MTLQQQIIKALGAKPQINAEEEIRRSVDFLKSYLQTYPFIKSLVLGISGGQDSTLAGKLCQMAINELRQETGNESLQFIAVRLPYGVQADEQDCQDAIAFIQPDRVLTVNIKGAVLASEQALREACIELSDFVRGNEKARERMKAQYSIAGMTSGVVVGTDHAAEAITGFFTKYGDGGTDINPLYRLNKRQGKQLLAALGCPEHLYKKAPTADLEDDRPSLPDEVALGVTYDNIDDYLEGKNVPQQVARTIENWYLKTEHKRRPPITVFDDFWKK.

46-53 (GISGGQDS) is a binding site for ATP. Position 52 (D52) interacts with Mg(2+). R140 provides a ligand contact to deamido-NAD(+). T160 is an ATP binding site. Mg(2+) is bound at residue E165. The deamido-NAD(+) site is built by K173 and D180. Residues K189 and T211 each contribute to the ATP site. 260–261 (HK) lines the deamido-NAD(+) pocket.

The protein belongs to the NAD synthetase family. As to quaternary structure, homodimer.

It catalyses the reaction deamido-NAD(+) + NH4(+) + ATP = AMP + diphosphate + NAD(+) + H(+). It functions in the pathway cofactor biosynthesis; NAD(+) biosynthesis; NAD(+) from deamido-NAD(+) (ammonia route): step 1/1. Catalyzes the ATP-dependent amidation of deamido-NAD to form NAD. Uses ammonia as a nitrogen source. In Escherichia coli O157:H7, this protein is NH(3)-dependent NAD(+) synthetase.